Reading from the N-terminus, the 871-residue chain is Pentatricopeptide repeat-containing protein DOT4, chloroplastic (871 aa).

The N-terminal 28 residues, 1–28 (MAMLVTNLSSSSFCFFSSPHLQNQKEIR), are a transit peptide targeting the chloroplast. PPR repeat units lie at residues 60 to 94 (SVTD…DIDP), 96 to 127 (TLCS…GFVI), 128 to 158 (DSNL…VKIE), 159 to 193 (KALF…GVEM), 194 to 228 (DSYT…GFGE), 229 to 259 (RNSV…MTER), 260 to 294 (DVIS…GIEI), 295 to 329 (DLAT…CFSR), 330 to 360 (EDRF…MSDR), 361 to 395 (SVVS…GISP), 396 to 430 (DVYT…DLGF), 431 to 465 (DIFV…DIIS), 466 to 497 (WNTI…RFSP), 498 to 532 (DERT…GYFS), 533 to 563 (DRHV…IASK), 564 to 598 (DLVS…GIEA), 599 to 629 (DEIS…MRHE), and 635 to 665 (TVEH…MPIP). The tract at residues 670 to 745 (IWGALLCGCR…NPGCSWIEIK (76 aa)) is type E motif. Residues 746-776 (GRVNIFVAGDSSNPETENIEAFLRKVRARMI) are type E(+) motif. Residues 777 to 871 (EEGYSPLTKY…DGHCSCRGFW (95 aa)) are type DYW motif.

Belongs to the PPR family. PCMP-H subfamily. It depends on Zn(2+) as a cofactor. Weakly expressed in leaves.

Its subcellular location is the plastid. The protein localises to the chloroplast. Its function is as follows. Plays a major role in single RNA editing events in chloroplasts. Acts as a site-recognition transacting factor involved in the edition of the unique site (corresponding to cytidine-488) of rpoC1, which is a plastid-encoded subunit of the chloroplast DNA-directed RNA polymerase. May provide the catalytic activity for editing site conversion. Involved in leaf vasculature patterning. The polypeptide is Pentatricopeptide repeat-containing protein DOT4, chloroplastic (Arabidopsis thaliana (Mouse-ear cress)).